Here is a 268-residue protein sequence, read N- to C-terminus: Hemin import ATP-binding protein HmuV (268 aa).

Residues 5 to 241 enclose the ABC transporter domain; that stretch reads LKAEAASFAL…ELIADVFDVA (237 aa). An ATP-binding site is contributed by 37 to 44; sequence GPNGAGKS.

This sequence belongs to the ABC transporter superfamily. Heme (hemin) importer (TC 3.A.1.14.5) family. The complex is composed of two ATP-binding proteins (HmuV), two transmembrane proteins (HmuU) and a solute-binding protein (HmuT).

The protein localises to the cell inner membrane. Functionally, part of the ABC transporter complex HmuTUV involved in hemin import. Responsible for energy coupling to the transport system. This Rhodopseudomonas palustris (strain ATCC BAA-98 / CGA009) protein is Hemin import ATP-binding protein HmuV.